The primary structure comprises 188 residues: dCTP deaminase (188 aa).

DCTP contacts are provided by residues 111–116 (KSTYAR), 135–137 (TLE), glutamine 156, tyrosine 170, lysine 179, and glutamine 180. The active-site Proton donor/acceptor is glutamate 137.

It belongs to the dCTP deaminase family. As to quaternary structure, homotrimer.

It carries out the reaction dCTP + H2O + H(+) = dUTP + NH4(+). It functions in the pathway pyrimidine metabolism; dUMP biosynthesis; dUMP from dCTP (dUTP route): step 1/2. In terms of biological role, catalyzes the deamination of dCTP to dUTP. The protein is dCTP deaminase of Orientia tsutsugamushi (strain Boryong) (Rickettsia tsutsugamushi).